Here is a 491-residue protein sequence, read N- to C-terminus: Subtilase-type proteinase RRT12 (491 aa).

A signal peptide spans 1-17; sequence MKPQCILISLLVNLAYA. N-linked (GlcNAc...) asparagine glycosylation is found at Asn38, Asn64, Asn106, and Asn121. The Peptidase S8 domain occupies 142–442; that stretch reads PFDVGDKDRY…FPRLNIEAIA (301 aa). Residues Asp174 and His205 each act as charge relay system in the active site. Residues Asn268 and Asn356 are each glycosylated (N-linked (GlcNAc...) asparagine). The active-site Charge relay system is the Ser365. Asn449 carries N-linked (GlcNAc...) asparagine glycosylation.

Belongs to the peptidase S8 family. N-glycosylated.

It localises to the spore wall. Functionally, subtilisin-related protease involved in the formation of a protective dityrosine layer required for spore wall assembly. Identified in a screen for mutants with increased levels of rDNA transcription. This chain is Subtilase-type proteinase RRT12 (RRT12), found in Saccharomyces cerevisiae (strain ATCC 204508 / S288c) (Baker's yeast).